Consider the following 341-residue polypeptide: Phosphate acyltransferase (341 aa).

The protein belongs to the PlsX family. As to quaternary structure, homodimer. Probably interacts with PlsY.

The protein localises to the cytoplasm. The catalysed reaction is a fatty acyl-[ACP] + phosphate = an acyl phosphate + holo-[ACP]. Its pathway is lipid metabolism; phospholipid metabolism. Its function is as follows. Catalyzes the reversible formation of acyl-phosphate (acyl-PO(4)) from acyl-[acyl-carrier-protein] (acyl-ACP). This enzyme utilizes acyl-ACP as fatty acyl donor, but not acyl-CoA. In Photobacterium profundum (strain SS9), this protein is Phosphate acyltransferase.